A 201-amino-acid polypeptide reads, in one-letter code: Translation machinery-associated protein 22 (201 aa).

An SUI1 domain is found at V94–L165.

Belongs to the DENR family. As to quaternary structure, interacts with the 40S ribosomal subunit.

Its subcellular location is the cytoplasm. This Meyerozyma guilliermondii (strain ATCC 6260 / CBS 566 / DSM 6381 / JCM 1539 / NBRC 10279 / NRRL Y-324) (Yeast) protein is Translation machinery-associated protein 22 (TMA22).